Reading from the N-terminus, the 115-residue chain is uncharacterized protein (115 aa).

The protein belongs to the transposase 34 family.

This is an uncharacterized protein from Sinorhizobium fredii (strain NBRC 101917 / NGR234).